Reading from the N-terminus, the 122-residue chain is Conotoxin flf14c (122 aa).

The first 22 residues, 1–22 (MGFRVLVLIVMVTTSALPFTFS), serve as a signal peptide directing secretion. The propeptide occupies 23-96 (EESGRSPFRP…AESPVGQKRW (74 aa)). Residues 53-89 (RADGQTPDMHQPEMRRPEMRRPEVRRPEVRQPEFAES) form a disordered region. The segment covering 62–85 (HQPEMRRPEMRRPEVRRPEVRQPE) has biased composition (basic and acidic residues). Disulfide bonds link Cys-101–Cys-121 and Cys-105–Cys-117.

Expressed by the venom duct.

The protein localises to the secreted. This is Conotoxin flf14c from Conus anabathrum floridanus (Florida cone).